The sequence spans 553 residues: Hydroxylamine reductase (553 aa).

4 residues coordinate [2Fe-2S] cluster: C3, C6, C18, and C25. Positions 252, 276, 320, 408, 436, 461, 495, and 497 each coordinate hybrid [4Fe-2O-2S] cluster. The residue at position 408 (C408) is a Cysteine persulfide.

It belongs to the HCP family. It depends on [2Fe-2S] cluster as a cofactor. Hybrid [4Fe-2O-2S] cluster is required as a cofactor.

Its subcellular location is the cytoplasm. The enzyme catalyses A + NH4(+) + H2O = hydroxylamine + AH2 + H(+). Functionally, catalyzes the reduction of hydroxylamine to form NH(3) and H(2)O. This chain is Hydroxylamine reductase, found in Vibrio parahaemolyticus serotype O3:K6 (strain RIMD 2210633).